The primary structure comprises 117 residues: Large ribosomal subunit protein uL18 (117 aa).

This sequence belongs to the universal ribosomal protein uL18 family. As to quaternary structure, part of the 50S ribosomal subunit; part of the 5S rRNA/L5/L18/L25 subcomplex. Contacts the 5S and 23S rRNAs.

In terms of biological role, this is one of the proteins that bind and probably mediate the attachment of the 5S RNA into the large ribosomal subunit, where it forms part of the central protuberance. In Blochmanniella pennsylvanica (strain BPEN), this protein is Large ribosomal subunit protein uL18.